The primary structure comprises 320 residues: Cytochrome f (320 aa).

The first 35 residues, 1–35, serve as a signal peptide directing secretion; sequence MQTRNAFSWLKKQITRSISVSLMIYILTRTSISSA. Heme is bound by residues tyrosine 36, cysteine 56, cysteine 59, and histidine 60. Residues 286–306 traverse the membrane as a helical segment; sequence VQGLLFFLASVILAQIFLVLK.

The protein belongs to the cytochrome f family. In terms of assembly, the 4 large subunits of the cytochrome b6-f complex are cytochrome b6, subunit IV (17 kDa polypeptide, petD), cytochrome f and the Rieske protein, while the 4 small subunits are PetG, PetL, PetM and PetN. The complex functions as a dimer. Heme is required as a cofactor.

The protein resides in the plastid. It is found in the chloroplast thylakoid membrane. Component of the cytochrome b6-f complex, which mediates electron transfer between photosystem II (PSII) and photosystem I (PSI), cyclic electron flow around PSI, and state transitions. The chain is Cytochrome f from Solanum bulbocastanum (Wild potato).